The sequence spans 820 residues: Phosphoenolpyruvate synthase (820 aa).

Histidine 438 functions as the Tele-phosphohistidine intermediate in the catalytic mechanism. Substrate-binding residues include arginine 539, arginine 587, glutamate 689, glycine 710, serine 711, asparagine 712, and aspartate 713. Mg(2+) is bound at residue glutamate 689. Aspartate 713 lines the Mg(2+) pocket. Cysteine 762 serves as the catalytic Proton donor.

Belongs to the PEP-utilizing enzyme family. It depends on Mg(2+) as a cofactor.

The enzyme catalyses pyruvate + ATP + H2O = phosphoenolpyruvate + AMP + phosphate + 2 H(+). Its pathway is carbohydrate biosynthesis; gluconeogenesis. In terms of biological role, catalyzes the phosphorylation of pyruvate to phosphoenolpyruvate. In Aeropyrum pernix (strain ATCC 700893 / DSM 11879 / JCM 9820 / NBRC 100138 / K1), this protein is Phosphoenolpyruvate synthase (ppsA).